We begin with the raw amino-acid sequence, 848 residues long: Leucine--tRNA ligase (848 aa).

Over residues 1 to 16 the composition is skewed to basic and acidic residues; that stretch reads MCPEQPHDTRAERDEM. The segment at 1–30 is disordered; the sequence is MCPEQPHDTRAERDEMSEQTQQAAQPAETA. Low complexity predominate over residues 18-30; it reads EQTQQAAQPAETA. The 'HIGH' region motif lies at 69-79; it reads PYPSGDLHMGH. The short motif at 614 to 618 is the 'KMSKS' region element; it reads KMSKS. K617 is an ATP binding site.

Belongs to the class-I aminoacyl-tRNA synthetase family.

The protein localises to the cytoplasm. The enzyme catalyses tRNA(Leu) + L-leucine + ATP = L-leucyl-tRNA(Leu) + AMP + diphosphate. The chain is Leucine--tRNA ligase from Nocardioides sp. (strain ATCC BAA-499 / JS614).